The following is a 319-amino-acid chain: MTRPALIGDIGGTNARFALVTPGAFDLHDIRTLPCAHYPSLSDAIRAYLKEVGAEMPTEACLAFACPVHDDEVRMTNNAWRFSKRQVAEEFGFTLFKVINDFTAQALGVPHVADDELVALGDGEAAPGCTRLIFGPGTGLGMAGLFPGQHDWIPLPTEGGHISFAPTDQHERDLLAYFQARYGRVSVERILCGQGLLDLYRAHAQLAKQVARYNTPAEVTGAARAGDPLARNALERFLKILGDVSGDAALMLGARGGVYLCGGILPRLLDWLPHSHFRDAFADKGRMHAYTAHIPVWVVTAPWNGLLGACEALHNEEVT.

8–13 (GDIGGT) provides a ligand contact to ATP.

This sequence belongs to the bacterial glucokinase family.

The protein localises to the cytoplasm. It carries out the reaction D-glucose + ATP = D-glucose 6-phosphate + ADP + H(+). The polypeptide is Glucokinase (Chromohalobacter salexigens (strain ATCC BAA-138 / DSM 3043 / CIP 106854 / NCIMB 13768 / 1H11)).